The chain runs to 230 residues: Cytochrome c oxidase subunit 2 (230 aa).

Residues 1–14 lie on the Mitochondrial intermembrane side of the membrane; that stretch reads MAHPTQLGFQDAAS. Residues 15-45 form a helical membrane-spanning segment; the sequence is PVMEELLHFHDHALMIVFLISALVLYVIITT. Residues 46–59 lie on the Mitochondrial matrix side of the membrane; sequence VSTKLTNMYILDSQ. The helical transmembrane segment at 60–87 threads the bilayer; the sequence is EIEIVWTVLPALILILIALPSLRILYLM. The Mitochondrial intermembrane portion of the chain corresponds to 88-230; that stretch reads DEINDPHLTI…NWSTLMLKDA (143 aa). Cu cation contacts are provided by H161, C196, E198, C200, H204, and M207. A Mg(2+)-binding site is contributed by E198.

Belongs to the cytochrome c oxidase subunit 2 family. In terms of assembly, component of the cytochrome c oxidase (complex IV, CIV), a multisubunit enzyme composed of 14 subunits. The complex is composed of a catalytic core of 3 subunits MT-CO1, MT-CO2 and MT-CO3, encoded in the mitochondrial DNA, and 11 supernumerary subunits COX4I, COX5A, COX5B, COX6A, COX6B, COX6C, COX7A, COX7B, COX7C, COX8 and NDUFA4, which are encoded in the nuclear genome. The complex exists as a monomer or a dimer and forms supercomplexes (SCs) in the inner mitochondrial membrane with NADH-ubiquinone oxidoreductase (complex I, CI) and ubiquinol-cytochrome c oxidoreductase (cytochrome b-c1 complex, complex III, CIII), resulting in different assemblies (supercomplex SCI(1)III(2)IV(1) and megacomplex MCI(2)III(2)IV(2)). Found in a complex with TMEM177, COA6, COX18, COX20, SCO1 and SCO2. Interacts with TMEM177 in a COX20-dependent manner. Interacts with COX20. Interacts with COX16. The cofactor is Cu cation.

The protein resides in the mitochondrion inner membrane. The catalysed reaction is 4 Fe(II)-[cytochrome c] + O2 + 8 H(+)(in) = 4 Fe(III)-[cytochrome c] + 2 H2O + 4 H(+)(out). Its function is as follows. Component of the cytochrome c oxidase, the last enzyme in the mitochondrial electron transport chain which drives oxidative phosphorylation. The respiratory chain contains 3 multisubunit complexes succinate dehydrogenase (complex II, CII), ubiquinol-cytochrome c oxidoreductase (cytochrome b-c1 complex, complex III, CIII) and cytochrome c oxidase (complex IV, CIV), that cooperate to transfer electrons derived from NADH and succinate to molecular oxygen, creating an electrochemical gradient over the inner membrane that drives transmembrane transport and the ATP synthase. Cytochrome c oxidase is the component of the respiratory chain that catalyzes the reduction of oxygen to water. Electrons originating from reduced cytochrome c in the intermembrane space (IMS) are transferred via the dinuclear copper A center (CU(A)) of subunit 2 and heme A of subunit 1 to the active site in subunit 1, a binuclear center (BNC) formed by heme A3 and copper B (CU(B)). The BNC reduces molecular oxygen to 2 water molecules using 4 electrons from cytochrome c in the IMS and 4 protons from the mitochondrial matrix. This Formosania lacustris (Oriental stream loach) protein is Cytochrome c oxidase subunit 2 (mt-co2).